The primary structure comprises 91 residues: Small ribosomal subunit protein bS16 (91 aa).

This sequence belongs to the bacterial ribosomal protein bS16 family.

This is Small ribosomal subunit protein bS16 from Staphylococcus aureus (strain Mu3 / ATCC 700698).